A 73-amino-acid chain; its full sequence is uncharacterized protein (73 aa).

A signal peptide spans methionine 1 to aspartate 22. A helical membrane pass occupies residues threonine 44 to tyrosine 66.

Its subcellular location is the membrane. This is an uncharacterized protein from Bacillus subtilis (strain 168).